The following is a 296-amino-acid chain: Diaminopimelate epimerase (296 aa).

Substrate is bound by residues Asn-17, Gln-49, and Asn-69. The Proton donor role is filled by Cys-78. Residues 79-80, Asn-171, Asn-205, and 223-224 each bind substrate; these read GN and ER. The active-site Proton acceptor is the Cys-232. Position 233-234 (233-234) interacts with substrate; it reads GT.

Belongs to the diaminopimelate epimerase family. In terms of assembly, homodimer.

It localises to the cytoplasm. It carries out the reaction (2S,6S)-2,6-diaminopimelate = meso-2,6-diaminopimelate. It participates in amino-acid biosynthesis; L-lysine biosynthesis via DAP pathway; DL-2,6-diaminopimelate from LL-2,6-diaminopimelate: step 1/1. Functionally, catalyzes the stereoinversion of LL-2,6-diaminopimelate (L,L-DAP) to meso-diaminopimelate (meso-DAP), a precursor of L-lysine and an essential component of the bacterial peptidoglycan. In Methylorubrum extorquens (strain CM4 / NCIMB 13688) (Methylobacterium extorquens), this protein is Diaminopimelate epimerase.